Reading from the N-terminus, the 202-residue chain is Complement component C8 gamma chain (202 aa).

A signal peptide spans M1 to A23. C96 and C188 form a disulfide bridge. The N-linked (GlcNAc...) asparagine glycan is linked to N173.

It belongs to the calycin superfamily. Lipocalin family. Heterotrimer of 3 chains: alpha (C8A), beta (C8B) and gamma (C8G); the alpha and gamma chains are disulfide bonded. Component of the membrane attack complex (MAC), composed of complement C5b, C6, C7, C8A, C8B, C8G and multiple copies of the pore-forming subunit C9.

It is found in the secreted. Its subcellular location is the target cell membrane. With respect to regulation, membrane attack complex (MAC) assembly is inhibited by CD59, thereby protecting self-cells from damage during complement activation. MAC assembly is also inhibited by clusterin (CLU) chaperones that inhibit polymerization of C9. Its function is as follows. Component of the membrane attack complex (MAC), a multiprotein complex activated by the complement cascade, which inserts into a target cell membrane and forms a pore, leading to target cell membrane rupture and cell lysis. The MAC is initiated by proteolytic cleavage of C5 into complement C5b in response to the classical, alternative, lectin and GZMK complement pathways. The complement pathways consist in a cascade of proteins that leads to phagocytosis and breakdown of pathogens and signaling that strengthens the adaptive immune system. C8G, together with C8A and C8B, inserts into the target membrane, but does not form pores by itself. During MAC assembly, associates with C5b, C6 and C7 to form the C5b8 intermediate complex that inserts into the target membrane and traverses the bilayer increasing membrane rigidity. The sequence is that of Complement component C8 gamma chain (C8G) from Oryctolagus cuniculus (Rabbit).